The following is a 560-amino-acid chain: uncharacterized protein (560 aa).

The zn(2)-C6 fungal-type DNA-binding region spans 18-44 (CLRCRRRKVKCDRQYPCSRCKESEESC). The disordered stretch occupies residues 60–80 (LSRPITRETDSSAHQETRTRL). Over residues 64–80 (ITRETDSSAHQETRTRL) the composition is skewed to basic and acidic residues. The chain crosses the membrane as a helical span at residues 182–202 (FATSIILIVTAIAVALSLESF).

The protein resides in the nucleus membrane. This is an uncharacterized protein from Schizosaccharomyces pombe (strain 972 / ATCC 24843) (Fission yeast).